A 203-amino-acid polypeptide reads, in one-letter code: Small ribosomal subunit protein uS4c (203 aa).

Positions Met-91–Lys-159 constitute an S4 RNA-binding domain.

This sequence belongs to the universal ribosomal protein uS4 family. In terms of assembly, part of the 30S ribosomal subunit. Contacts protein S5. The interaction surface between S4 and S5 is involved in control of translational fidelity.

The protein localises to the plastid. Its subcellular location is the chloroplast. Functionally, one of the primary rRNA binding proteins, it binds directly to 16S rRNA where it nucleates assembly of the body of the 30S subunit. In terms of biological role, with S5 and S12 plays an important role in translational accuracy. The protein is Small ribosomal subunit protein uS4c (rps4) of Lopidium concinnum (Moss).